The primary structure comprises 990 residues: Translation initiation factor IF-2 (990 aa).

Residues 92–402 (KKRTFVKRDD…QRDEHLQAAP (311 aa)) form a disordered region. 2 stretches are compositionally biased toward low complexity: residues 104–116 (EGAA…AAFA) and 131–151 (EAPA…AAPA). The span at 158–201 (ELARREEQARHQAELIRRQEAELAAKRAAREAREKREREAEERA) shows a compositional bias: basic and acidic residues. Positions 223–243 (TREQAAEATARNAAQLQARAK) are enriched in low complexity. The span at 244–264 (AAAESKARSDEEAARAADLDA) shows a compositional bias: basic and acidic residues. Low complexity-rich tracts occupy residues 281–290 (ATPKKAVMVA) and 318–342 (PAVG…PGAG). Basic and acidic residues-rich tracts occupy residues 358-368 (PAKKKEIKTRG) and 386-398 (RRGD…DEHL). Residues 490 to 659 (PRAPVVTVMG…LLQADVMELK (170 aa)) form the tr-type G domain. The G1 stretch occupies residues 499 to 506 (GHVDHGKT). 499 to 506 (GHVDHGKT) serves as a coordination point for GTP. The G2 stretch occupies residues 524 to 528 (GITQH). The interval 545-548 (DTPG) is G3. Residues 545-549 (DTPGH) and 599-602 (TKAD) contribute to the GTP site. A G4 region spans residues 599-602 (TKAD). A G5 region spans residues 635 to 637 (SSK).

This sequence belongs to the TRAFAC class translation factor GTPase superfamily. Classic translation factor GTPase family. IF-2 subfamily.

The protein resides in the cytoplasm. Functionally, one of the essential components for the initiation of protein synthesis. Protects formylmethionyl-tRNA from spontaneous hydrolysis and promotes its binding to the 30S ribosomal subunits. Also involved in the hydrolysis of GTP during the formation of the 70S ribosomal complex. The sequence is that of Translation initiation factor IF-2 from Verminephrobacter eiseniae (strain EF01-2).